Here is a 517-residue protein sequence, read N- to C-terminus: Ribonuclease Y (517 aa).

Residues 1–21 (MIESLIALIAAIVGLGIGYLV) traverse the membrane as a helical segment. Residues 207–273 (LINVINIKND…TKVIELLVED (67 aa)) enclose the KH domain. The region spanning 333–426 (ALAHSLEVAH…VCAADTLSAA (94 aa)) is the HD domain.

This sequence belongs to the RNase Y family.

Its subcellular location is the cell membrane. Its function is as follows. Endoribonuclease that initiates mRNA decay. The protein is Ribonuclease Y of Campylobacter jejuni subsp. doylei (strain ATCC BAA-1458 / RM4099 / 269.97).